The following is a 921-amino-acid chain: GPI ethanolamine phosphate transferase 1 (921 aa).

Residues 37–57 (PGHVALIAGLYEDVSAVTTGW) traverse the membrane as a helical segment. 2 N-linked (GlcNAc...) asparagine glycosylation sites follow: asparagine 69 and asparagine 132. Transmembrane regions (helical) follow at residues 386–406 (ALIT…VIDL), 418–438 (TLIG…SFAI), 441–461 (SPLT…EVYA), 483–503 (FVSL…LALG), 509–529 (ILTI…FSFL), 533–553 (MALS…TLLP), 561–581 (VNMI…YLIL), 606–626 (LVGI…SSAL), 640–660 (VMGW…RAKP), and 679–699 (FVIL…AVLV). The tract at residues 715–737 (SANGAARSAPSPAKPHNLETSQT) is disordered. Transmembrane regions (helical) follow at residues 752–772 (VALF…NVAS), 795–815 (AMLI…LGIL), 825–845 (ALFM…FWVV), and 862–882 (VIAS…AMFI).

This sequence belongs to the PIGG/PIGN/PIGO family. PIGN subfamily.

The protein resides in the endoplasmic reticulum membrane. Its pathway is glycolipid biosynthesis; glycosylphosphatidylinositol-anchor biosynthesis. Ethanolamine phosphate transferase involved in glycosylphosphatidylinositol-anchor biosynthesis. Transfers ethanolamine phosphate to the first alpha-1,4-linked mannose of the glycosylphosphatidylinositol precursor of GPI-anchor. In Chaetomium globosum (strain ATCC 6205 / CBS 148.51 / DSM 1962 / NBRC 6347 / NRRL 1970) (Soil fungus), this protein is GPI ethanolamine phosphate transferase 1 (MCD4).